Here is a 636-residue protein sequence, read N- to C-terminus: Rust resistance kinase Lr10 (636 aa).

The N-terminal stretch at 1 to 24 (MSKLLVIALLLLPLINHGIYLATA) is a signal peptide. The Extracellular portion of the chain corresponds to 25–276 (WDDQDFFKYC…MPDPHGSHIK (252 aa)). N-linked (GlcNAc...) asparagine glycosylation is found at N56, N177, and N222. Residues 277–297 (VIAATSSVAAFVALLLTVATV) traverse the membrane as a helical segment. Over 298–636 (LYLSLKTRYN…FVSSENELMS (339 aa)) the chain is Cytoplasmic. The region spanning 339-628 (RRFKEKVGQG…SLQMPPKPFV (290 aa)) is the Protein kinase domain. ATP-binding positions include 345-353 (VGQGGFGSV) and K367. Residue D466 is the Proton acceptor of the active site.

The protein belongs to the protein kinase superfamily. Ser/Thr protein kinase family. In terms of tissue distribution, specifically expressed in the aerial parts of the plant.

The protein resides in the cell membrane. It catalyses the reaction L-seryl-[protein] + ATP = O-phospho-L-seryl-[protein] + ADP + H(+). The enzyme catalyses L-threonyl-[protein] + ATP = O-phospho-L-threonyl-[protein] + ADP + H(+). The sequence is that of Rust resistance kinase Lr10 from Triticum aestivum (Wheat).